Here is a 1239-residue protein sequence, read N- to C-terminus: Zinc finger and BTB domain-containing protein 40 (1239 aa).

Positions 24 to 87 (CDCTISIGTI…MYTGKLPVGK (64 aa)) constitute a BTB domain. 3 disordered regions span residues 130-231 (SAPS…TSTE), 687-732 (HLEA…PDPA), and 779-801 (KELD…PKKK). Positions 136–145 (TFRKEPEKPQ) are enriched in basic and acidic residues. Residues 181–199 (SVSQEMSVNSPTAQESQRN) are compositionally biased toward polar residues. Ser190 carries the post-translational modification Phosphoserine. Positions 200 to 212 (AETPAETPTTAEA) are enriched in low complexity. The span at 687–703 (HLEANNKEDEKAAKEDS) shows a compositional bias: basic and acidic residues. Residue Ser703 is modified to Phosphoserine. Positions 705–719 (PGEQNDQGETGSLPG) are enriched in polar residues. 10 C2H2-type zinc fingers span residues 807-830 (VTCD…LTEH), 836-858 (FSCE…LRLH), 864-887 (FMCK…KKKH), 893-915 (YACQ…VRTH), 921-944 (YVCR…HTFH), 950-973 (YDCK…HEVH), 978-1000 (HPCP…VVTH), 1006-1029 (FSCG…RTHH), 1046-1069 (LQCS…KAEH), and 1075-1098 (HECD…KCQH). A Glycyl lysine isopeptide (Lys-Gly) (interchain with G-Cter in SUMO2) cross-link involves residue Lys1066. The C2H2-type 11; atypical zinc finger occupies 1104–1127 (FRCLYCAATFRFPGALQHHVTTEH). Residues 1135-1158 (FPCELCGELFTSQAQLDSHLESEH) form a C2H2-type 12 zinc finger.

It belongs to the krueppel C2H2-type zinc-finger protein family.

It is found in the nucleus. Functionally, may be involved in transcriptional regulation. The sequence is that of Zinc finger and BTB domain-containing protein 40 (ZBTB40) from Homo sapiens (Human).